The chain runs to 164 residues: Phosphopantetheine adenylyltransferase (164 aa).

Ser-11 is a substrate binding site. ATP-binding positions include Ser-11–Phe-12 and His-19. Substrate is bound by residues Lys-43, Ala-76, and Arg-90. Residues Gly-91–Arg-93, Glu-101, and Tyr-126–Ser-132 contribute to the ATP site.

This sequence belongs to the bacterial CoaD family. Homohexamer. It depends on Mg(2+) as a cofactor.

The protein resides in the cytoplasm. It catalyses the reaction (R)-4'-phosphopantetheine + ATP + H(+) = 3'-dephospho-CoA + diphosphate. It participates in cofactor biosynthesis; coenzyme A biosynthesis; CoA from (R)-pantothenate: step 4/5. Functionally, reversibly transfers an adenylyl group from ATP to 4'-phosphopantetheine, yielding dephospho-CoA (dPCoA) and pyrophosphate. In Streptococcus gordonii (strain Challis / ATCC 35105 / BCRC 15272 / CH1 / DL1 / V288), this protein is Phosphopantetheine adenylyltransferase.